We begin with the raw amino-acid sequence, 72 residues long: uncharacterized protein (72 aa).

Helical transmembrane passes span 15-35 and 50-70; these read WEIL…IGSI and ILIY…MYFI.

It is found in the host membrane. This is an uncharacterized protein from Spiroplasma melliferum (SpV1).